The sequence spans 788 residues: Protein translocase subunit SecA 2 (788 aa).

ATP-binding positions include Gln-86, 104–108, and Asp-493; that span reads GEGKT.

Belongs to the SecA family. In terms of assembly, monomer and homodimer. Part of the essential Sec protein translocation apparatus which comprises SecA, SecYEG and auxiliary proteins SecDF. Other proteins may also be involved.

The protein resides in the cell membrane. Its subcellular location is the cytoplasm. The enzyme catalyses ATP + H2O + cellular proteinSide 1 = ADP + phosphate + cellular proteinSide 2.. Functionally, part of the Sec protein translocase complex. Interacts with the SecYEG preprotein conducting channel. Has a central role in coupling the hydrolysis of ATP to the transfer of proteins into and across the cell membrane, serving as an ATP-driven molecular motor driving the stepwise translocation of polypeptide chains across the membrane. This is Protein translocase subunit SecA 2 from Bacillus anthracis.